Reading from the N-terminus, the 127-residue chain is Glycine cleavage system H protein (127 aa).

One can recognise a Lipoyl-binding domain in the interval 22–104 (KARIGITHFA…YEKAWMIVVE (83 aa)). At lysine 63 the chain carries N6-lipoyllysine.

This sequence belongs to the GcvH family. In terms of assembly, the glycine cleavage system is composed of four proteins: P, T, L and H. Requires (R)-lipoate as cofactor.

In terms of biological role, the glycine cleavage system catalyzes the degradation of glycine. The H protein shuttles the methylamine group of glycine from the P protein to the T protein. Its function is as follows. Is also involved in protein lipoylation via its role as an octanoyl/lipoyl carrier protein intermediate. This is Glycine cleavage system H protein from Bacillus velezensis (strain DSM 23117 / BGSC 10A6 / LMG 26770 / FZB42) (Bacillus amyloliquefaciens subsp. plantarum).